The chain runs to 397 residues: Tryptophan synthase beta chain (397 aa).

Lysine 87 carries the N6-(pyridoxal phosphate)lysine modification.

The protein belongs to the TrpB family. As to quaternary structure, tetramer of two alpha and two beta chains. Requires pyridoxal 5'-phosphate as cofactor.

It carries out the reaction (1S,2R)-1-C-(indol-3-yl)glycerol 3-phosphate + L-serine = D-glyceraldehyde 3-phosphate + L-tryptophan + H2O. Its pathway is amino-acid biosynthesis; L-tryptophan biosynthesis; L-tryptophan from chorismate: step 5/5. The beta subunit is responsible for the synthesis of L-tryptophan from indole and L-serine. This Enterobacter sp. (strain 638) protein is Tryptophan synthase beta chain.